Reading from the N-terminus, the 213-residue chain is NADH dehydrogenase [ubiquinone] iron-sulfur protein 7, mitochondrial (213 aa).

Residues 1 to 38 constitute a mitochondrion transit peptide; it reads MAVLSAPGLRGFRILGLRSSVGPAVQARGVHQSVATDG. Positions 31-53 are disordered; that stretch reads HQSVATDGPSSTQPALPKARAVA. Positions 33-44 are enriched in polar residues; that stretch reads SVATDGPSSTQP. The [4Fe-4S] cluster site is built by cysteine 88 and cysteine 89. Arginine 111 bears the Hydroxyarginine mark. Cysteine 153 and cysteine 183 together coordinate [4Fe-4S] cluster.

This sequence belongs to the complex I 20 kDa subunit family. In terms of assembly, core subunit of respiratory chain NADH dehydrogenase (Complex I) which is composed of 45 different subunits. This is a component of the iron-sulfur (IP) fragment of the enzyme. It depends on [4Fe-4S] cluster as a cofactor. Post-translationally, hydroxylated at Arg-111 by NDUFAF5 early in the pathway of assembly of complex I, before the formation of the juncture between peripheral and membrane arms.

Its subcellular location is the mitochondrion inner membrane. It catalyses the reaction a ubiquinone + NADH + 5 H(+)(in) = a ubiquinol + NAD(+) + 4 H(+)(out). Its function is as follows. Core subunit of the mitochondrial membrane respiratory chain NADH dehydrogenase (Complex I) which catalyzes electron transfer from NADH through the respiratory chain, using ubiquinone as an electron acceptor. Essential for the catalytic activity of complex I. The polypeptide is NADH dehydrogenase [ubiquinone] iron-sulfur protein 7, mitochondrial (NDUFS7) (Homo sapiens (Human)).